The sequence spans 326 residues: Target of rapamycin complex subunit LST8 (326 aa).

Methionine 1 is subject to N-acetylmethionine. WD repeat units lie at residues 1-37 (MNTT…CTRT), 40-80 (HQDS…PIIS), 83-122 (GVSK…LQCQ), 126-165 (QVNA…NEQL), and 168-207 (EPEF…GDEV). The residue at position 51 (threonine 51) is a Phosphothreonine. Residue lysine 86 forms a Glycyl lysine isopeptide (Lys-Gly) (interchain with G-Cter in SUMO3) linkage. Residues lysine 215, lysine 245, and lysine 261 each participate in a glycyl lysine isopeptide (Lys-Gly) (interchain with G-Cter in SUMO3) cross-link. Residues 218 to 257 (AHTRYALQCRFSPDSTLLATCSADQTCKIWRTSNFSLMTE) form a WD 6 repeat. One copy of the WD 7 repeat lies at 268–309 (SSRGWMWGCAFSGDSQYIVTASSDNLARLWCVETGEIKREYG). Lysine 305 is covalently cross-linked (Glycyl lysine isopeptide (Lys-Gly) (interchain with G-Cter in SUMO3); alternate). Glycyl lysine isopeptide (Lys-Gly) (interchain with G-Cter in ubiquitin); alternate cross-links involve residues lysine 305 and lysine 313. Lysine 313 is covalently cross-linked (Glycyl lysine isopeptide (Lys-Gly) (interchain with G-Cter in SUMO1); alternate).

Belongs to the WD repeat LST8 family. As to quaternary structure, part of the mechanistic target of rapamycin complex 1 (mTORC1) which contains MTOR, MLST8 and RPTOR. mTORC1 associates with AKT1S1/PRAS40, which inhibits its activity. mTORC1 binds to and is inhibited by FKBP12-rapamycin. Within mTORC1, interacts directly with MTOR and RPTOR. Component of the mechanistic target of rapamycin complex 2 (mTORC2), consisting in two heterotretramers composed of MTOR, MLST8, RICTOR and MAPKAP1/SIN1. Contrary to mTORC1, mTORC2 does not bind to and is not sensitive to FKBP12-rapamycin. mTORC1 and mTORC2 associate with DEPTOR, which regulates their activity. Interacts with RHEB. Interacts with MEAK7. Interacts with SIK3. Interacts with SLC38A7; this interaction promotes the recruitment of mTORC1 to the lysosome and its subsequent activation. Post-translationally, phosphorylation at Thr-51 by CDK1 promotes ubiquitination by the SCF(FBXW7) complex, followed by degradation. Ubiquitination by the SCF(FBXW7) and SCF(FBXW11) complexes following phosphorylation at Thr-51 by CDK1, leads to its degradation by the proteasome. Ubiquitination at Lys-305 and Lys-313 by TRAF2 via 'Lys-63'-linked polyubiquitin chains inhibits formation of the mTORC2 complex, while promoting formation of the mTORC1 complex: ubiquitination disrupts the interaction between MLST8 and MAPKAP1/SIN1 to favor mTORC1 assembly. Deubiquitination at Lys-305 and Lys-313 by OTUD7B promotes MLST8 interaction with MAPKAP1/SIN1, facilitating mTORC2 assembly. In terms of processing, sumoylation with SUMO1, SUMO2 and SUMO3 promotes assembly of both mTORC1 and mTORC2 complexes. Expressed at highest levels in the brain and testis, followed by lung, heart, kidney, skeletal muscle, spleen and liver. Also expressed in epididymal, abdominal and brown fat, small intestine and pancreas.

The protein resides in the lysosome membrane. The protein localises to the cytoplasm. Functionally, subunit of both mTORC1 and mTORC2, which regulates cell growth and survival in response to nutrient and hormonal signals. mTORC1 is activated in response to growth factors or amino acids. In response to nutrients, mTORC1 is recruited to the lysosome membrane and promotes protein, lipid and nucleotide synthesis by phosphorylating several substrates, such as ribosomal protein S6 kinase (RPS6KB1 and RPS6KB2) and EIF4EBP1 (4E-BP1). In the same time, it inhibits catabolic pathways by phosphorylating the autophagy initiation components ULK1 and ATG13, as well as transcription factor TFEB, a master regulators of lysosomal biogenesis and autophagy. The mTORC1 complex is inhibited in response to starvation and amino acid depletion. Within mTORC1, MLST8 interacts directly with MTOR and enhances its kinase activity. In nutrient-poor conditions, stabilizes the MTOR-RPTOR interaction and favors RPTOR-mediated inhibition of MTOR activity. As part of the mTORC2 complex, transduces signals from growth factors to pathways involved in proliferation, cytoskeletal organization, lipogenesis and anabolic output. mTORC2 is also activated by growth factors, but seems to be nutrient-insensitive. In response to growth factors, mTORC2 phosphorylates and activates AGC protein kinase family members, including AKT (AKT1, AKT2 and AKT3), PKC (PRKCA, PRKCB and PRKCE) and SGK1. mTORC2 functions upstream of Rho GTPases to regulate the actin cytoskeleton, probably by activating one or more Rho-type guanine nucleotide exchange factors. mTORC2 promotes the serum-induced formation of stress-fibers or F-actin. mTORC2 plays a critical role in AKT1 activation by mediating phosphorylation of different sites depending on the context, such as 'Thr-450', 'Ser-473', 'Ser-477' or 'Thr-479', facilitating the phosphorylation of the activation loop of AKT1 on 'Thr-308' by PDPK1/PDK1 which is a prerequisite for full activation. mTORC2 regulates the phosphorylation of SGK1 at 'Ser-422'. mTORC2 also modulates the phosphorylation of PRKCA on 'Ser-657'. Within mTORC2, MLST8 acts as a bridge between MAPKAP1/SIN1 and MTOR. In Rattus norvegicus (Rat), this protein is Target of rapamycin complex subunit LST8.